Consider the following 974-residue polypeptide: Isoleucine--tRNA ligase (974 aa).

The short motif at 69–79 is the 'HIGH' region element; it reads PYANGALHMGH. Glutamate 585 contributes to the L-isoleucyl-5'-AMP binding site. The 'KMSKS' region motif lies at 626-630; the sequence is KMSKS. Lysine 629 is an ATP binding site. Residues cysteine 939, cysteine 942, cysteine 959, and cysteine 962 each coordinate Zn(2+).

It belongs to the class-I aminoacyl-tRNA synthetase family. IleS type 1 subfamily. As to quaternary structure, monomer. It depends on Zn(2+) as a cofactor.

The protein resides in the cytoplasm. The enzyme catalyses tRNA(Ile) + L-isoleucine + ATP = L-isoleucyl-tRNA(Ile) + AMP + diphosphate. In terms of biological role, catalyzes the attachment of isoleucine to tRNA(Ile). As IleRS can inadvertently accommodate and process structurally similar amino acids such as valine, to avoid such errors it has two additional distinct tRNA(Ile)-dependent editing activities. One activity is designated as 'pretransfer' editing and involves the hydrolysis of activated Val-AMP. The other activity is designated 'posttransfer' editing and involves deacylation of mischarged Val-tRNA(Ile). In Parasynechococcus marenigrum (strain WH8102), this protein is Isoleucine--tRNA ligase.